The primary structure comprises 87 residues: Large ribosomal subunit protein bL31B (87 aa).

It belongs to the bacterial ribosomal protein bL31 family. Type B subfamily. Part of the 50S ribosomal subunit.

This chain is Large ribosomal subunit protein bL31B, found in Escherichia coli O9:H4 (strain HS).